Consider the following 109-residue polypeptide: Spermidine export protein MdtI (109 aa).

4 helical membrane passes run 6–26, 36–56, 64–84, and 88–108; these read WIHAAWLAFAIVLEIIANVFL, WFGLLSIAAVLGAFSALSQAV, AYALWGGFGIAATLAAGWVLF, and LNRKGWIGLVLLLAGMVMIKL.

It belongs to the drug/metabolite transporter (DMT) superfamily. Small multidrug resistance (SMR) (TC 2.A.7.1) family. MdtI subfamily. In terms of assembly, forms a complex with MdtJ.

The protein resides in the cell inner membrane. Its function is as follows. Catalyzes the excretion of spermidine. The polypeptide is Spermidine export protein MdtI (Enterobacter sp. (strain 638)).